A 131-amino-acid chain; its full sequence is uncharacterized protein (131 aa).

The region spanning 8-124 (DILVVDDDPD…ELIRLVQQYC (117 aa)) is the Response regulatory domain. 4-aspartylphosphate is present on aspartate 57.

This is an uncharacterized protein from Leptolyngbya boryana (Plectonema boryanum).